The primary structure comprises 331 residues: tRNA(Ile)-lysidine synthase (331 aa).

29-34 (SGGPDS) is an ATP binding site.

It belongs to the tRNA(Ile)-lysidine synthase family.

It localises to the cytoplasm. The catalysed reaction is cytidine(34) in tRNA(Ile2) + L-lysine + ATP = lysidine(34) in tRNA(Ile2) + AMP + diphosphate + H(+). Functionally, ligates lysine onto the cytidine present at position 34 of the AUA codon-specific tRNA(Ile) that contains the anticodon CAU, in an ATP-dependent manner. Cytidine is converted to lysidine, thus changing the amino acid specificity of the tRNA from methionine to isoleucine. The protein is tRNA(Ile)-lysidine synthase of Chlorobaculum tepidum (strain ATCC 49652 / DSM 12025 / NBRC 103806 / TLS) (Chlorobium tepidum).